We begin with the raw amino-acid sequence, 103 residues long: Endoribonuclease MazF3 (103 aa).

This sequence belongs to the PemK/MazF family. As to quaternary structure, forms a complex with cognate antitoxin MazE3.

Its function is as follows. Toxic component of a type II toxin-antitoxin (TA) system. Acts as an endoribonuclease, cleaving in U-rich regions. Neutralized by cognate antitoxin MazE3. The chain is Endoribonuclease MazF3 (mazF3) from Mycobacterium tuberculosis (strain CDC 1551 / Oshkosh).